The sequence spans 539 residues: Chaperonin GroEL 1 (539 aa).

ATP is bound by residues 29-32 (TLGP), 86-90 (DGTTT), glycine 413, 478-480 (NAA), and aspartate 494. A disordered region spans residues 520–539 (IVDKPAEPEDDGHGHHGHAH). Positions 523–533 (KPAEPEDDGHG) are enriched in basic and acidic residues.

Belongs to the chaperonin (HSP60) family. In terms of assembly, forms a cylinder of 14 subunits composed of two heptameric rings stacked back-to-back. Interacts with the co-chaperonin GroES.

The protein localises to the cytoplasm. It catalyses the reaction ATP + H2O + a folded polypeptide = ADP + phosphate + an unfolded polypeptide.. Its function is as follows. Together with its co-chaperonin GroES, plays an essential role in assisting protein folding. The GroEL-GroES system forms a nano-cage that allows encapsulation of the non-native substrate proteins and provides a physical environment optimized to promote and accelerate protein folding. The polypeptide is Chaperonin GroEL 1 (Mycobacterium ulcerans (strain Agy99)).